A 600-amino-acid polypeptide reads, in one-letter code: Keratin, type II cuticular Hb4 (600 aa).

Residues 1 to 165 (MSCRSYRVSS…PNAQRVKKDE (165 aa)) form a head region. One can recognise an IF rod domain in the interval 165–476 (EKEQIKTLNN…RLLEGEESRL (312 aa)). The tract at residues 166–200 (KEQIKTLNNKFASFIDKVRFLEQQNKLLETKWSFL) is coil 1A. Residues 201 to 210 (QEQKCIRSNL) are linker 1. A coil 1B region spans residues 211–311 (EPLFESYITN…YMEEIQLLQS (101 aa)). The tract at residues 312-328 (HISETSVIVKMDNSRDL) is linker 12. The segment at 329–472 (NLDGIIAEVK…ATYRRLLEGE (144 aa)) is coil 2. Residues 473–600 (ESRLCEGVGP…STTTSCRTKY (128 aa)) form a tail region.

Belongs to the intermediate filament family. As to quaternary structure, heterotetramer of two type I and two type II keratins. As to expression, expressed in the hair follicles.

This Homo sapiens (Human) protein is Keratin, type II cuticular Hb4 (KRT84).